Reading from the N-terminus, the 383-residue chain is Meiotically up-regulated gene 93 protein (383 aa).

The TPR repeat unit spans residues 75-108 (KKVIWRRGLAYLRLGHPHLANRDWEHSLELDPNN).

The protein localises to the cytoplasm. It is found in the nucleus. Its function is as follows. Has a role in meiosis. This Schizosaccharomyces pombe (strain 972 / ATCC 24843) (Fission yeast) protein is Meiotically up-regulated gene 93 protein (mug93).